Consider the following 796-residue polypeptide: Kinesin-like protein KIF3C (796 aa).

The Kinesin motor domain maps to 10-367 (ALKVVARCRP…LRFANRAKNI (358 aa)). An ATP-binding site is contributed by 97 to 104 (GQTGTGKT). Disordered regions lie at residues 252–292 (RQNK…PKEA), 397–422 (EKKG…APAG), and 758–796 (KVRK…VDHD). A compositionally biased stretch (low complexity) spans 256-269 (AGPNAAGGPATQPT). Residues 378–632 (KDTLLREFQE…NEQTRELKLK (255 aa)) adopt a coiled-coil conformation. Residues 401–416 (MLGKRPRRKSSRRKKA) show a composition bias toward basic residues. The tract at residues 633–793 (YLIIENFIPP…SVPLHPATVV (161 aa)) is globular.

This sequence belongs to the TRAFAC class myosin-kinesin ATPase superfamily. Kinesin family. Kinesin II subfamily. In terms of assembly, heterodimer of KIF3A and KIF3C.

The protein localises to the cytoplasm. The protein resides in the cytoskeleton. Functionally, microtubule-based anterograde translocator for membranous organelles. This is Kinesin-like protein KIF3C (Kif3c) from Mus musculus (Mouse).